Here is a 125-residue protein sequence, read N- to C-terminus: Small ribosomal subunit protein uS13 (125 aa).

The interval 93–125 (RKGLPVRGQRTKTNARTRKGPKRTVAGKKKAGR) is disordered.

Belongs to the universal ribosomal protein uS13 family. In terms of assembly, part of the 30S ribosomal subunit. Forms a loose heterodimer with protein S19. Forms two bridges to the 50S subunit in the 70S ribosome.

Located at the top of the head of the 30S subunit, it contacts several helices of the 16S rRNA. In the 70S ribosome it contacts the 23S rRNA (bridge B1a) and protein L5 of the 50S subunit (bridge B1b), connecting the 2 subunits; these bridges are implicated in subunit movement. Contacts the tRNAs in the A and P-sites. This is Small ribosomal subunit protein uS13 from Arthrobacter sp. (strain FB24).